A 119-amino-acid polypeptide reads, in one-letter code: Large ribosomal subunit protein uL24 (119 aa).

The protein belongs to the universal ribosomal protein uL24 family. As to quaternary structure, part of the 50S ribosomal subunit.

In terms of biological role, one of two assembly initiator proteins, it binds directly to the 5'-end of the 23S rRNA, where it nucleates assembly of the 50S subunit. Functionally, one of the proteins that surrounds the polypeptide exit tunnel on the outside of the subunit. This is Large ribosomal subunit protein uL24 from Clavibacter sepedonicus (Clavibacter michiganensis subsp. sepedonicus).